The following is a 332-amino-acid chain: Ribosomal RNA small subunit methyltransferase C (332 aa).

This sequence belongs to the methyltransferase superfamily. RsmC family. In terms of assembly, monomer.

It localises to the cytoplasm. The enzyme catalyses guanosine(1207) in 16S rRNA + S-adenosyl-L-methionine = N(2)-methylguanosine(1207) in 16S rRNA + S-adenosyl-L-homocysteine + H(+). Specifically methylates the guanine in position 1207 of 16S rRNA in the 30S particle. The chain is Ribosomal RNA small subunit methyltransferase C from Pseudomonas entomophila (strain L48).